We begin with the raw amino-acid sequence, 501 residues long: UDP-N-acetylmuramoyl-L-alanyl-D-glutamate--2,6-diaminopimelate ligase (501 aa).

Serine 29 contacts UDP-N-acetyl-alpha-D-muramoyl-L-alanyl-D-glutamate. 112–118 (GTNGKTS) contributes to the ATP binding site. UDP-N-acetyl-alpha-D-muramoyl-L-alanyl-D-glutamate is bound by residues 161–162 (TT), serine 188, and arginine 196. Lysine 228 is modified (N6-carboxylysine). Meso-2,6-diaminopimelate is bound by residues arginine 393, 417-420 (DNPR), glycine 468, and glutamate 472. The Meso-diaminopimelate recognition motif signature appears at 417 to 420 (DNPR).

Belongs to the MurCDEF family. MurE subfamily. The cofactor is Mg(2+). In terms of processing, carboxylation is probably crucial for Mg(2+) binding and, consequently, for the gamma-phosphate positioning of ATP.

The protein resides in the cytoplasm. The enzyme catalyses UDP-N-acetyl-alpha-D-muramoyl-L-alanyl-D-glutamate + meso-2,6-diaminopimelate + ATP = UDP-N-acetyl-alpha-D-muramoyl-L-alanyl-gamma-D-glutamyl-meso-2,6-diaminopimelate + ADP + phosphate + H(+). It participates in cell wall biogenesis; peptidoglycan biosynthesis. Its function is as follows. Catalyzes the addition of meso-diaminopimelic acid to the nucleotide precursor UDP-N-acetylmuramoyl-L-alanyl-D-glutamate (UMAG) in the biosynthesis of bacterial cell-wall peptidoglycan. This is UDP-N-acetylmuramoyl-L-alanyl-D-glutamate--2,6-diaminopimelate ligase from Acidovorax sp. (strain JS42).